A 432-amino-acid polypeptide reads, in one-letter code: Homogentisate 1,2-dioxygenase (432 aa).

His287 (proton acceptor) is an active-site residue. Fe cation-binding residues include His330 and Glu336. Residues Tyr345 and His366 each contribute to the homogentisate site. His366 contacts Fe cation.

This sequence belongs to the homogentisate dioxygenase family. Hexamer; dimer of trimers. Fe cation is required as a cofactor.

The catalysed reaction is homogentisate + O2 = 4-maleylacetoacetate + H(+). It participates in amino-acid degradation; L-phenylalanine degradation; acetoacetate and fumarate from L-phenylalanine: step 4/6. Functionally, involved in the catabolism of homogentisate (2,5-dihydroxyphenylacetate or 2,5-OH-PhAc), a central intermediate in the degradation of phenylalanine and tyrosine. Catalyzes the oxidative ring cleavage of the aromatic ring of homogentisate to yield maleylacetoacetate. In Pseudomonas aeruginosa (strain UCBPP-PA14), this protein is Homogentisate 1,2-dioxygenase.